Here is an 896-residue protein sequence, read N- to C-terminus: FHIP family protein C05D11.8 (896 aa).

Positions 823–865 (STASSPRTSDDHDPTLFYGRSTMAPPGRKPLLREPSRQETLDD) are disordered. The span at 853-865 (LLREPSRQETLDD) shows a compositional bias: basic and acidic residues.

It belongs to the FHIP family.

In Caenorhabditis elegans, this protein is FHIP family protein C05D11.8.